The following is an 87-amino-acid chain: Small ribosomal subunit protein bS20 (87 aa).

Positions 1 to 22 are disordered; the sequence is MANSAQARKRARQSVKQRAHNA. The segment covering 7 to 19 has biased composition (basic residues); that stretch reads ARKRARQSVKQRA.

Belongs to the bacterial ribosomal protein bS20 family.

In terms of biological role, binds directly to 16S ribosomal RNA. In Neisseria gonorrhoeae (strain ATCC 700825 / FA 1090), this protein is Small ribosomal subunit protein bS20.